Consider the following 453-residue polypeptide: Tol-Pal system protein TolB (453 aa).

The first 39 residues, 1–39 (MSFIPNTEAEALSALFSRRSVLGATAAGGLLATPLAAFA), serve as a signal peptide directing secretion.

Belongs to the TolB family. The Tol-Pal system is composed of five core proteins: the inner membrane proteins TolA, TolQ and TolR, the periplasmic protein TolB and the outer membrane protein Pal. They form a network linking the inner and outer membranes and the peptidoglycan layer.

The protein localises to the periplasm. Functionally, part of the Tol-Pal system, which plays a role in outer membrane invagination during cell division and is important for maintaining outer membrane integrity. This Gluconobacter oxydans (strain 621H) (Gluconobacter suboxydans) protein is Tol-Pal system protein TolB.